The following is a 278-amino-acid chain: Complement component 1 Q subcomponent-binding protein, mitochondrial (278 aa).

Residues 1-70 constitute a mitochondrion transit peptide; the sequence is MFQLLRCVPR…PCACGCGCSG (70 aa). Residues 73–90 are C1q binding; it reads TEGDKAFVDFLSDEIKEE. S84 is modified (phosphoserine). N6-acetyllysine occurs at positions 88 and 91. The segment at 136-164 is disordered; it reads IPPAFGGEEEEPSQGQKAEEQEPELTSTP. The tract at residues 166-209 is interaction with MAVS; it reads FVVEVTKDGSSKALVLDCHYPEDEIGQEDDQSDIFSIKEVSFQA. Y185 bears the Phosphotyrosine mark. S197 and S201 each carry phosphoserine. T210 carries the post-translational modification Phosphothreonine.

It belongs to the MAM33 family. In terms of assembly, homotrimer; three monomers form a donut-shaped structure with an unusually asymmetric charge distribution on the surface. Interacts with CDK13, HRK, VTN, NFYB, ADRA1B, FOXC1, DDX21, DDX50, NCL, SRSF1 and SRSF9. Interacts with CD93; the association may represent a cell surface C1q receptor. Interacts with KRT1; the association represents a cell surface kininogen receptor. Interacts with CD209; the interaction is indicative for a C1q:C1QBP:CD209 signaling complex. Interacts with FBL and RRP1; the respective interactions with C1QBP are competitive. Probably associates with the mitoribosome. Interacts with MAVS; the interaction occurs upon viral transfection. Interacts with PPIF. Interacts with U2AF1L4. Interacts with PLEKHN1. Interacts with VGF-derived peptide TLQP-21. Interacts with MRE11 and RAD50; forming the MRC (MRE11-RAD50-C1QBP) complex that inhibits the activity of MRE11.

It is found in the mitochondrion matrix. It localises to the nucleus. The protein localises to the cell membrane. The protein resides in the secreted. Its subcellular location is the cytoplasm. It is found in the nucleolus. Functionally, multifunctional and multicompartmental protein involved in inflammation and infection processes, ribosome biogenesis, protein synthesis in mitochondria, regulation of apoptosis, transcriptional regulation and pre-mRNA splicing. At the cell surface is thought to act as an endothelial receptor for plasma proteins of the complement and kallikrein-kinin cascades. Putative receptor for C1q; specifically binds to the globular 'heads' of C1q thus inhibiting C1; may perform the receptor function through a complex with C1qR/CD93. In complex with cytokeratin-1/KRT1 is a high affinity receptor for kininogen-1/HMWK. Can also bind other plasma proteins, such as coagulation factor XII leading to its autoactivation. May function to bind initially fluid kininogen-1 to the cell membrane. The secreted form may enhance both extrinsic and intrinsic coagulation pathways. It is postulated that the cell surface form requires docking with transmembrane proteins for downstream signaling which might be specific for a cell-type or response. By acting as C1q receptor is involved in chemotaxis of immature dendritic cells and neutrophils and is proposed to signal through CD209/DC-SIGN on immature dendritic cells, through integrin alpha-4/beta-1 during trophoblast invasion of the decidua, and through integrin beta-1 during endothelial cell adhesion and spreading. Signaling involved in inhibition of innate immune response is implicating the PI3K-AKT/PKB pathway. Required for protein synthesis in mitochondria. In mitochondrial translation may be involved in formation of functional 55S mitoribosomes; the function seems to involve its RNA-binding activity. Acts as a RNA modification reader, which specifically recognizes and binds mitochondrial RNAs modified by C5-methylcytosine (m5C) in response to stress, and promotes recruitment of the mitochondrial degradosome complex, leading to their degradation. May be involved in the nucleolar ribosome maturation process; the function may involve the exchange of FBL for RRP1 in the association with pre-ribosome particles. Involved in regulation of RNA splicing by inhibiting the RNA-binding capacity of SRSF1 and its phosphorylation. Is required for the nuclear translocation of splicing factor U2AF1L4. Involved in regulation of CDKN2A- and HRK-mediated apoptosis. Stabilizes mitochondrial CDKN2A isoform smARF. May be involved in regulation of FOXC1 transcriptional activity and NFY/CCAAT-binding factor complex-mediated transcription. May play a role in antibacterial defense as it can bind to cell surface hyaluronan and inhibit Streptococcus pneumoniae hyaluronate lyase. May be involved in modulation of the immune response; ligation by HCV core protein is resulting in suppression of interleukin-12 production in monocyte-derived dendritic cells. Involved in regulation of antiviral response by inhibiting RIGI- and IFIH1-mediated signaling pathways probably involving its association with MAVS after viral infection. Acts as a regulator of DNA repair via homologous recombination by inhibiting the activity of MRE11: interacts with unphosphorylated MRE11 and RAD50 in absence of DNA damage, preventing formation and activity of the MRN complex. Following DNA damage, dissociates from phosphorylated MRE11, allowing formation of the MRN complex. This is Complement component 1 Q subcomponent-binding protein, mitochondrial (C1QBP) from Bos taurus (Bovine).